The following is a 336-amino-acid chain: Phosphonate dehydrogenase (336 aa).

Residues 155–156 (AI), E175, 235–237 (PCR), and D261 contribute to the NAD(+) site. R237 is an active-site residue. E266 is an active-site residue. Catalysis depends on H292, which acts as the Proton donor. 292-295 (HIGS) is a binding site for NAD(+).

As to quaternary structure, homodimer.

The enzyme catalyses phosphonate + NAD(+) + H2O = phosphate + NADH + H(+). Inhibited by NaCl, NADH and sulfite. Catalyzes phosphite (phosphonate) oxidation. This chain is Phosphonate dehydrogenase (ptxD), found in Stutzerimonas stutzeri (Pseudomonas stutzeri).